The primary structure comprises 169 residues: Transcription antitermination protein NusB (169 aa).

The interval 1-20 is disordered; sequence MAESSNKPFRGPVRANDRKA.

The protein belongs to the NusB family.

Functionally, involved in transcription antitermination. Required for transcription of ribosomal RNA (rRNA) genes. Binds specifically to the boxA antiterminator sequence of the ribosomal RNA (rrn) operons. The protein is Transcription antitermination protein NusB of Bradyrhizobium sp. (strain BTAi1 / ATCC BAA-1182).